A 280-amino-acid polypeptide reads, in one-letter code: Lysosome-associated membrane glycoprotein 5 (280 aa).

Positions 1 to 29 (MDLQGRGVPSIDRLRVLLMLFHTMAQIMA) are cleaved as a signal peptide. Over 30 to 235 (EQEVENLSGL…PVDEREQLEE (206 aa)) the chain is Extracellular. Residues Asn35, Asn53, and Asn127 are each glycosylated (N-linked (GlcNAc...) asparagine). Residues 236 to 256 (TLPLILGLILGLVIMVTLAIY) form a helical membrane-spanning segment. Residues 257–280 (HVHHKMTANQVQIPRDRSQYKHMG) are Cytoplasmic-facing.

The protein belongs to the LAMP family. Glycosylated. In terms of tissue distribution, expressed in plasmocytoid dendritic cells. Expressed in suprabasal skin keratinocytes and squamous cells (at protein level). Expressed in the brain and weakly in spleen and skin. Expressed in plasmocytoid dendritic cells.

The protein resides in the cell membrane. The protein localises to the cytoplasmic vesicle. It is found in the secretory vesicle. Its subcellular location is the synaptic vesicle membrane. It localises to the endoplasmic reticulum-Golgi intermediate compartment membrane. The protein resides in the endosome membrane. The protein localises to the cytoplasmic vesicle membrane. It is found in the cell projection. Its subcellular location is the dendrite. It localises to the growth cone membrane. The protein resides in the early endosome membrane. The protein localises to the recycling endosome. Its function is as follows. Plays a role in short-term synaptic plasticity in a subset of GABAergic neurons in the brain. This Homo sapiens (Human) protein is Lysosome-associated membrane glycoprotein 5 (LAMP5).